The sequence spans 434 residues: MKFSAYLTTLFIVLFSLFIQTVQAESEVRIVIDEGVDSARPIAIIPFKWNGSDSMPIDVADIISADLRNSGKFNPIAVSKMPQKPTSASEVISDVWSSLGIDAVVVGQVTPNEKGYSIAYQLVDTIGASGNAGEVLSQNQYAVPKNAIRLGAHTISDEVFEKLTAIRGAFRTKIAYVVQKHGGSKPYQVRVADYDGHNQFIVYSSSQPLMSPAWSPDGSKLAYVSFENRKSQLIVHDLQSGARRVIAAFPGHNGAPAFSPDGSKIAFASSKDGVLNIYVMNLGNGTISQLTSGAGNNTEPSWSPDGQSIIFTSDRAGGPQIYQMDVFGNGISLVSAGRGYSGKISADGSILVMIYGDNIVKKDLATGVTEMLSSTFLDESPSISPNGIMIIYSSTQGLGKVLQLVSADGRFKARLPSSDGQIKFPAWSPYLNKN.

Positions 1-24 are cleaved as a signal peptide; the sequence is MKFSAYLTTLFIVLFSLFIQTVQA.

The protein belongs to the TolB family. The Tol-Pal system is composed of five core proteins: the inner membrane proteins TolA, TolQ and TolR, the periplasmic protein TolB and the outer membrane protein Pal. They form a network linking the inner and outer membranes and the peptidoglycan layer.

The protein resides in the periplasm. Part of the Tol-Pal system, which plays a role in outer membrane invagination during cell division and is important for maintaining outer membrane integrity. The polypeptide is Tol-Pal system protein TolB (Histophilus somni (strain 129Pt) (Haemophilus somnus)).